A 442-amino-acid polypeptide reads, in one-letter code: Phosphoglucosamine mutase (442 aa).

The active-site Phosphoserine intermediate is S103. Residues S103, D241, D243, and D245 each coordinate Mg(2+). Phosphoserine is present on S103.

This sequence belongs to the phosphohexose mutase family. The cofactor is Mg(2+). Post-translationally, activated by phosphorylation.

The enzyme catalyses alpha-D-glucosamine 1-phosphate = D-glucosamine 6-phosphate. Functionally, catalyzes the conversion of glucosamine-6-phosphate to glucosamine-1-phosphate. The sequence is that of Phosphoglucosamine mutase from Deinococcus deserti (strain DSM 17065 / CIP 109153 / LMG 22923 / VCD115).